The primary structure comprises 172 residues: Outer-membrane lipoprotein carrier protein (172 aa).

The N-terminal stretch at 1–16 (MRIALLWVAFGALALA) is a signal peptide.

It belongs to the LolA family. In terms of assembly, monomer.

It localises to the periplasm. In terms of biological role, participates in the translocation of lipoproteins from the inner membrane to the outer membrane. Only forms a complex with a lipoprotein if the residue after the N-terminal Cys is not an aspartate (The Asp acts as a targeting signal to indicate that the lipoprotein should stay in the inner membrane). In Wolinella succinogenes (strain ATCC 29543 / DSM 1740 / CCUG 13145 / JCM 31913 / LMG 7466 / NCTC 11488 / FDC 602W) (Vibrio succinogenes), this protein is Outer-membrane lipoprotein carrier protein.